A 189-amino-acid chain; its full sequence is MAPTLLLLLPALAGLISVAQGQAFHLGRCPTPPVQENFDVHKYLGRWYEIEKIPVSFEKGNCIQANYSLMENGNIKVLNQELRPDGTVNQIEGQATQSNLTEPAKLGVKFFQLMPTAPYWVLATDYENYALVYSCTTIIWLFHMDHVWILGRNRYLPPETVTYLKDILTANNIDIEKMTVTDQVNCPEF.

The signal sequence occupies residues 1–21 (MAPTLLLLLPALAGLISVAQG). Glutamine 22 bears the Pyrrolidone carboxylic acid mark. 2 cysteine pairs are disulfide-bonded: cysteine 29/cysteine 135 and cysteine 62/cysteine 186. N-linked (GlcNAc...) asparagine glycans are attached at residues asparagine 66 and asparagine 99.

Belongs to the calycin superfamily. Lipocalin family. Homodimer. As to expression, most heavily expressed in adrenal gland, lung, brain, testis and spleen.

The protein localises to the secreted. Functionally, APOD occurs in the macromolecular complex with lecithin-transport and binding of bilin. Appears to be able to transport a variety of ligands in a number of different contexts. In Oryctolagus cuniculus (Rabbit), this protein is Apolipoprotein D (APOD).